Reading from the N-terminus, the 621-residue chain is UvrABC system protein C (621 aa).

Residues 20–106 (TQSGIYQFFD…IKSLKPKYNI (87 aa)) form the GIY-YIG domain. The region spanning 212–247 (KALLKILESKMHTLSHNLQFEEAAIMRDRIQKITQM) is the UVR domain.

It belongs to the UvrC family. Interacts with UvrB in an incision complex.

The protein localises to the cytoplasm. In terms of biological role, the UvrABC repair system catalyzes the recognition and processing of DNA lesions. UvrC both incises the 5' and 3' sides of the lesion. The N-terminal half is responsible for the 3' incision and the C-terminal half is responsible for the 5' incision. This is UvrABC system protein C from Helicobacter hepaticus (strain ATCC 51449 / 3B1).